Here is a 241-residue protein sequence, read N- to C-terminus: MGQILYQLDDNSLTFPLIECALTEPNGLLALGGDLSPERLIAAYSQGIFPWYSDNDPLMWWSPNPRAIIDIDQLRINRTLRKAINKSPYQITLNQDFSQVTQLCANAPFRTDGTWILPEMEAAYLTLHQQGYAHSIEVWYTDEHDNKALVGGLYGVAVNGFFSGESMFYKQSNASKFALIALGQLLKSVDINFIDCQLLNPFLEDMGAKETSRDIFIHKQQHALTKTMPDDFWQPRTLTVI.

Belongs to the L/F-transferase family.

The protein resides in the cytoplasm. The enzyme catalyses N-terminal L-lysyl-[protein] + L-leucyl-tRNA(Leu) = N-terminal L-leucyl-L-lysyl-[protein] + tRNA(Leu) + H(+). The catalysed reaction is N-terminal L-arginyl-[protein] + L-leucyl-tRNA(Leu) = N-terminal L-leucyl-L-arginyl-[protein] + tRNA(Leu) + H(+). It carries out the reaction L-phenylalanyl-tRNA(Phe) + an N-terminal L-alpha-aminoacyl-[protein] = an N-terminal L-phenylalanyl-L-alpha-aminoacyl-[protein] + tRNA(Phe). Functionally, functions in the N-end rule pathway of protein degradation where it conjugates Leu, Phe and, less efficiently, Met from aminoacyl-tRNAs to the N-termini of proteins containing an N-terminal arginine or lysine. This Colwellia psychrerythraea (strain 34H / ATCC BAA-681) (Vibrio psychroerythus) protein is Leucyl/phenylalanyl-tRNA--protein transferase.